The primary structure comprises 145 residues: Large ribosomal subunit protein uL15 (145 aa).

A compositionally biased stretch (basic and acidic residues) spans 1–13 (MNLHELKYNEGAR). Residues 1 to 56 (MNLHELKYNEGARKEKHRVGRGHAAGKGKQAGKGQSGQLKRTGSKPGFEGGQNPWY) form a disordered region. Over residues 14–26 (KEKHRVGRGHAAG) the composition is skewed to basic residues.

It belongs to the universal ribosomal protein uL15 family. Part of the 50S ribosomal subunit.

Functionally, binds to the 23S rRNA. This is Large ribosomal subunit protein uL15 from Mycoplasma mobile (strain ATCC 43663 / 163K / NCTC 11711) (Mesomycoplasma mobile).